A 209-amino-acid chain; its full sequence is Kynurenine formamidase (209 aa).

Trp20 lines the substrate pocket. Zn(2+) contacts are provided by His50, His54, and Asp56. The active-site Proton donor/acceptor is His60. The Zn(2+) site is built by His161 and Glu173.

The protein belongs to the Cyclase 1 superfamily. KynB family. As to quaternary structure, homodimer. Zn(2+) is required as a cofactor.

It carries out the reaction N-formyl-L-kynurenine + H2O = L-kynurenine + formate + H(+). It participates in amino-acid degradation; L-tryptophan degradation via kynurenine pathway; L-kynurenine from L-tryptophan: step 2/2. In terms of biological role, catalyzes the hydrolysis of N-formyl-L-kynurenine to L-kynurenine, the second step in the kynurenine pathway of tryptophan degradation. The protein is Kynurenine formamidase of Bacillus cereus (strain ZK / E33L).